We begin with the raw amino-acid sequence, 686 residues long: Translation initiation factor IF-2 (686 aa).

Residues 54-105 are disordered; it reads KPSVADEFEVEEKVVRSKKNSNKKKKKGKGNEDKRQENFAGRQQTQTVETPD. A compositionally biased stretch (basic residues) spans 69-81; the sequence is RSKKNSNKKKKKG. The tr-type G domain maps to 188–357; that stretch reads ERPAVVTIMG…LLVSEVEEYK (170 aa). Residues 197 to 204 form a G1 region; the sequence is GHVDHGKT. 197 to 204 serves as a coordination point for GTP; that stretch reads GHVDHGKT. The tract at residues 222–226 is G2; that stretch reads GITQH. Positions 243–246 are G3; that stretch reads DTPG. Residues 243 to 247 and 297 to 300 each bind GTP; these read DTPGH and NKMD. Residues 297–300 form a G4 region; sequence NKMD. The segment at 333–335 is G5; that stretch reads SAI.

The protein belongs to the TRAFAC class translation factor GTPase superfamily. Classic translation factor GTPase family. IF-2 subfamily.

The protein localises to the cytoplasm. Its function is as follows. One of the essential components for the initiation of protein synthesis. Protects formylmethionyl-tRNA from spontaneous hydrolysis and promotes its binding to the 30S ribosomal subunits. Also involved in the hydrolysis of GTP during the formation of the 70S ribosomal complex. The chain is Translation initiation factor IF-2 from Bacillus cereus (strain AH187).